A 470-amino-acid chain; its full sequence is 3-isopropylmalate dehydratase large subunit (470 aa).

[4Fe-4S] cluster-binding residues include C346, C406, and C409.

The protein belongs to the aconitase/IPM isomerase family. LeuC type 1 subfamily. In terms of assembly, heterodimer of LeuC and LeuD. The cofactor is [4Fe-4S] cluster.

It catalyses the reaction (2R,3S)-3-isopropylmalate = (2S)-2-isopropylmalate. Its pathway is amino-acid biosynthesis; L-leucine biosynthesis; L-leucine from 3-methyl-2-oxobutanoate: step 2/4. Its function is as follows. Catalyzes the isomerization between 2-isopropylmalate and 3-isopropylmalate, via the formation of 2-isopropylmaleate. This is 3-isopropylmalate dehydratase large subunit from Shouchella clausii (strain KSM-K16) (Alkalihalobacillus clausii).